A 237-amino-acid polypeptide reads, in one-letter code: 2,3-bisphosphoglycerate-dependent phosphoglycerate mutase (237 aa).

Residues 8–15, 21–22, arginine 60, 87–90, lysine 98, 114–115, and 180–181 each bind substrate; these read RHGQSAWN, TG, ERHY, RR, and GN. Residue histidine 9 is the Tele-phosphohistidine intermediate of the active site. Glutamate 87 (proton donor/acceptor) is an active-site residue.

It belongs to the phosphoglycerate mutase family. BPG-dependent PGAM subfamily. Homodimer.

It carries out the reaction (2R)-2-phosphoglycerate = (2R)-3-phosphoglycerate. It participates in carbohydrate degradation; glycolysis; pyruvate from D-glyceraldehyde 3-phosphate: step 3/5. Functionally, catalyzes the interconversion of 2-phosphoglycerate and 3-phosphoglycerate. The polypeptide is 2,3-bisphosphoglycerate-dependent phosphoglycerate mutase (Hyphomonas neptunium (strain ATCC 15444)).